The sequence spans 153 residues: Ribonuclease H (153 aa).

Residues 1–142 (MRKKIEIFTD…CDELARIAAE (142 aa)) form the RNase H type-1 domain. Positions 10, 48, 70, and 134 each coordinate Mg(2+).

The protein belongs to the RNase H family. In terms of assembly, monomer. It depends on Mg(2+) as a cofactor.

It is found in the cytoplasm. The catalysed reaction is Endonucleolytic cleavage to 5'-phosphomonoester.. Its function is as follows. Endonuclease that specifically degrades the RNA of RNA-DNA hybrids. The protein is Ribonuclease H of Baumannia cicadellinicola subsp. Homalodisca coagulata.